We begin with the raw amino-acid sequence, 292 residues long: 2-dehydro-3-deoxygalactonokinase (292 aa).

The protein belongs to the DgoK family.

It carries out the reaction 2-dehydro-3-deoxy-D-galactonate + ATP = 2-dehydro-3-deoxy-6-phospho-D-galactonate + ADP + H(+). The protein operates within carbohydrate acid metabolism; D-galactonate degradation; D-glyceraldehyde 3-phosphate and pyruvate from D-galactonate: step 2/3. The chain is 2-dehydro-3-deoxygalactonokinase (dgoK) from Escherichia coli (strain K12).